Here is a 338-residue protein sequence, read N- to C-terminus: Glycerol-3-phosphate dehydrogenase [NAD(P)+] (338 aa).

Residues Ser13, Trp14, and Lys108 each contribute to the NADPH site. Sn-glycerol 3-phosphate-binding residues include Lys108, Gly139, and Ser141. Ala143 is an NADPH binding site. Positions 194, 247, 257, 258, and 259 each coordinate sn-glycerol 3-phosphate. Catalysis depends on Lys194, which acts as the Proton acceptor. Residue Arg258 participates in NADPH binding. NADPH-binding residues include Val282 and Glu284.

This sequence belongs to the NAD-dependent glycerol-3-phosphate dehydrogenase family.

The protein localises to the cytoplasm. It carries out the reaction sn-glycerol 3-phosphate + NAD(+) = dihydroxyacetone phosphate + NADH + H(+). The enzyme catalyses sn-glycerol 3-phosphate + NADP(+) = dihydroxyacetone phosphate + NADPH + H(+). It functions in the pathway membrane lipid metabolism; glycerophospholipid metabolism. In terms of biological role, catalyzes the reduction of the glycolytic intermediate dihydroxyacetone phosphate (DHAP) to sn-glycerol 3-phosphate (G3P), the key precursor for phospholipid synthesis. This is Glycerol-3-phosphate dehydrogenase [NAD(P)+] from Streptococcus pyogenes serotype M2 (strain MGAS10270).